Reading from the N-terminus, the 453-residue chain is GTPase Der (453 aa).

EngA-type G domains are found at residues proline 3 to lysine 167 and isoleucine 187 to lysine 360. GTP-binding positions include glycine 9–serine 16, aspartate 57–leucine 61, asparagine 119–aspartate 122, glycine 193–serine 200, aspartate 240–alanine 244, and asparagine 305–aspartate 308. Residues arginine 361–glutamate 445 enclose the KH-like domain.

This sequence belongs to the TRAFAC class TrmE-Era-EngA-EngB-Septin-like GTPase superfamily. EngA (Der) GTPase family. As to quaternary structure, associates with the 50S ribosomal subunit.

GTPase that plays an essential role in the late steps of ribosome biogenesis. This chain is GTPase Der, found in Buchnera aphidicola subsp. Acyrthosiphon pisum (strain Tuc7).